The chain runs to 206 residues: Sclerostin domain-containing protein 1 (206 aa).

The signal sequence occupies residues 1–23 (MLPPAIHFYLLPLACILMKSCLA). Asn47 carries an N-linked (GlcNAc...) asparagine glycan. 4 disulfides stabilise this stretch: Cys75–Cys133, Cys89–Cys147, Cys100–Cys163, and Cys104–Cys165. The CTCK domain maps to 75–170 (CRELRSTKYI…TACKCKRYTR (96 aa)). The N-linked (GlcNAc...) asparagine glycan is linked to Asn173. Positions 176–206 (SHNFESMSPAKPVQHHRERKRASKSSKHSMS) are disordered. Over residues 188-206 (VQHHRERKRASKSSKHSMS) the composition is skewed to basic residues.

Belongs to the sclerostin family. In terms of assembly, interacts with BMP2, BMP4, BMP6 and BMP7 with high affinity.

It is found in the secreted. Functionally, directly antagonizes activity of BMP2, BMP4, BMP6 and BMP7 in a dose-dependent manner. Enhances Wnt signaling and inhibits TGF-beta signaling. May be involved in the onset of endometrial receptivity for implantation/sensitization for the decidual cell reaction. In Pongo abelii (Sumatran orangutan), this protein is Sclerostin domain-containing protein 1 (SOSTDC1).